The sequence spans 269 residues: 5'-nucleotidase SurE (269 aa).

D11, D12, S43, and N101 together coordinate a divalent metal cation.

Belongs to the SurE nucleotidase family. It depends on a divalent metal cation as a cofactor.

Its subcellular location is the cytoplasm. It carries out the reaction a ribonucleoside 5'-phosphate + H2O = a ribonucleoside + phosphate. Functionally, nucleotidase that shows phosphatase activity on nucleoside 5'-monophosphates. The chain is 5'-nucleotidase SurE from Prochlorococcus marinus (strain AS9601).